Here is a 502-residue protein sequence, read N- to C-terminus: MQQDGSFSADARFDAVLVGAGIMSATLAALLHELDPGLRLLLVERLEGPARESSAANNNAGTGHAANCELNYTPMQADGTVATAKAVAINAGFERSLEFWGSLRERGELDTSSFLHQAAHISAVWTAENIAFLRQRFEQLSEIPAFAAMRWSEERTELTDWMPLVMAGRDLKQPVAATRIERGTDVDFGALTRAYLEPLQRSGALCVEYGTQVRDIKRLRRGDMTEADWRVILQGPSGKREVRAPFVFLGAGGGALPLLQRSGIPEADDFAGFPVSGLWLVCGDAQLAAKQRAKVYGKAAVGAPPMSVPHLDTRWIDGQRSLLFGPFAGFSSKFLKQGSLFDLPSSVRPTNLLPMLQVGATNIELVQYLINQLRQSPEERHDALQQFMPTARAEDWSLSVAGQRVQIIKRSKQGGRLQLGTEVVASMDGSLAALLGASPGASTAVTIMLEVLQRCFKQRLASAAWNERLQALLPSIGGDPVQDPALLLAMRQRSDALLDLQG.

The protein belongs to the MQO family. FAD serves as cofactor.

It catalyses the reaction (S)-malate + a quinone = a quinol + oxaloacetate. The protein operates within carbohydrate metabolism; tricarboxylic acid cycle; oxaloacetate from (S)-malate (quinone route): step 1/1. This is Probable malate:quinone oxidoreductase from Parasynechococcus marenigrum (strain WH8102).